The chain runs to 1435 residues: Gag-Pol polyprotein (1435 aa).

G2 carries N-myristoyl glycine; by host lipidation. The segment at 7-31 is interaction with Gp41; that stretch reads VLSGGKLDSWEKIRLRPGGRKKYKL. Positions 8–43 are interaction with host CALM1; sequence LSGGKLDSWEKIRLRPGGRKKYKLKHIVWASRELGR. The tract at residues 12–19 is interaction with host AP3D1; it reads KLDSWEKI. An interaction with membrane phosphatidylinositol 4,5-bisphosphate and RNA region spans residues 14–33; that stretch reads DSWEKIRLRPGGRKKYKLKH. Positions 16 to 22 match the Nuclear export signal motif; it reads WEKIRLR. A Nuclear localization signal motif is present at residues 26–32; that stretch reads RKKYKLK. The interval 72–76 is interaction with membrane phosphatidylinositol 4,5-bisphosphate; it reads EELRS. Residues 107 to 126 are disordered; the sequence is QKNSQQEIQQAAKNEGNSNP. Polar residues predominate over residues 108-126; sequence KNSQQEIQQAAKNEGNSNP. Position 131 is a phosphotyrosine; by host (Y131). The interaction with human PPIA/CYPA and NUP153 stretch occupies residues 188 to 226; that stretch reads NTVGGHQAAMQMLKDTINDEAAEWDRIHPQQAGPIPPGQ. Positions 276–362 are dimerization/Multimerization of capsid protein p24; it reads YSPVSILDIR…GGPSHKARVL (87 aa). 2 CCHC-type zinc fingers span residues 391-408 and 412-429; these read IKCFNCGKEGHLARNCRA and KGCWKCGKEGHQMKECTE. The segment at 444–478 is disordered; sequence GEARKLSPEQDRANSPTSRELRIRRGDSPLPEAGA. Residues 445–455 show a composition bias toward basic and acidic residues; sequence EARKLSPEQDR. The interval 489–493 is dimerization of protease; sequence PQITL. Positions 508-577 constitute a Peptidase A2 domain; that stretch reads IEALLDTGAD…TPINIIGRNM (70 aa). D513 serves as the catalytic For protease activity; shared with dimeric partner. Dimerization of protease regions lie at residues 537-543 and 576-588; these read GIGGFIK and NMLTQIGCTLNFP. Positions 631 to 821 constitute a Reverse transcriptase domain; it reads EGKISKIGPE…PPFLWMGYEL (191 aa). Mg(2+)-binding residues include D697, D772, and D773. The segment at 814 to 822 is RT 'primer grip'; sequence FLWMGYELH. The Tryptophan repeat motif motif lies at 985-1001; that stretch reads WEVWWTEYWQAAWIPEW. An RNase H type-1 domain is found at 1021–1144; the sequence is IPGAETYYVD…VDKLVSSGIR (124 aa). 4 residues coordinate Mg(2+): D1030, E1065, D1085, and D1136. Residues 1150–1191 form an Integrase-type zinc finger; that stretch reads DGIDKAQEEHERYHSNWRAMASDFNLPPVVAKEIVASCDKCQ. Zn(2+) contacts are provided by H1159, H1163, C1187, and C1190. The Integrase catalytic domain maps to 1201–1351; it reads VDCSPGIWQL…SAGERIIDII (151 aa). Mg(2+) is bound by residues D1211, D1263, and E1299. Positions 1370 to 1417 form a DNA-binding region, integrase-type; sequence FRVYYRDSRDPIWKGPAKLLWKGEGAVVIQDNNEIKVVPRRKAKILKD.

Homotrimer; further assembles as hexamers of trimers. Interacts with gp41 (via C-terminus). Interacts with host CALM1; this interaction induces a conformational change in the Matrix protein, triggering exposure of the myristate group. Interacts with host AP3D1; this interaction allows the polyprotein trafficking to multivesicular bodies during virus assembly. Part of the pre-integration complex (PIC) which is composed of viral genome, matrix protein, Vpr and integrase. As to quaternary structure, homodimer; the homodimer further multimerizes as homohexamers or homopentamers. Interacts with human PPIA/CYPA; This interaction stabilizes the capsid. Interacts with human NUP153. Interacts with host PDZD8; this interaction stabilizes the capsid. Interacts with monkey TRIM5; this interaction destabilizes the capsid. In terms of assembly, homodimer, whose active site consists of two apposed aspartic acid residues. Heterodimer of p66 RT and p51 RT (RT p66/p51). Heterodimerization of RT is essential for DNA polymerase activity. The overall folding of the subdomains is similar in p66 RT and p51 RT but the spatial arrangements of the subdomains are dramatically different. As to quaternary structure, homotetramer; may further associate as a homohexadecamer. Part of the pre-integration complex (PIC) which is composed of viral genome, matrix protein, Vpr and integrase. Interacts with human SMARCB1/INI1 and human PSIP1/LEDGF isoform 1. Interacts with human KPNA3; this interaction might play a role in nuclear import of the pre-integration complex. Interacts with human NUP153; this interaction might play a role in nuclear import of the pre-integration complex. Mg(2+) is required as a cofactor. Post-translationally, specific enzymatic cleavages by the viral protease yield mature proteins. The protease is released by autocatalytic cleavage. The polyprotein is cleaved during and after budding, this process is termed maturation. Proteolytic cleavage of p66 RT removes the RNase H domain to yield the p51 RT subunit. Nucleocapsid protein p7 might be further cleaved after virus entry. In terms of processing, tyrosine phosphorylated presumably in the virion by a host kinase. Phosphorylation is apparently not a major regulator of membrane association. Phosphorylated possibly by host MAPK1; this phosphorylation is necessary for Pin1-mediated virion uncoating. Post-translationally, methylated by host PRMT6, impairing its function by reducing RNA annealing and the initiation of reverse transcription.

Its subcellular location is the host cell membrane. The protein resides in the host endosome. It localises to the host multivesicular body. It is found in the virion membrane. The protein localises to the host nucleus. Its subcellular location is the host cytoplasm. The protein resides in the virion. The catalysed reaction is Specific for a P1 residue that is hydrophobic, and P1' variable, but often Pro.. It carries out the reaction Endohydrolysis of RNA in RNA/DNA hybrids. Three different cleavage modes: 1. sequence-specific internal cleavage of RNA. Human immunodeficiency virus type 1 and Moloney murine leukemia virus enzymes prefer to cleave the RNA strand one nucleotide away from the RNA-DNA junction. 2. RNA 5'-end directed cleavage 13-19 nucleotides from the RNA end. 3. DNA 3'-end directed cleavage 15-20 nucleotides away from the primer terminus.. The enzyme catalyses 3'-end directed exonucleolytic cleavage of viral RNA-DNA hybrid.. It catalyses the reaction DNA(n) + a 2'-deoxyribonucleoside 5'-triphosphate = DNA(n+1) + diphosphate. Its activity is regulated as follows. Protease: The viral protease is inhibited by many synthetic protease inhibitors (PIs), such as amprenavir, atazanavir, indinavir, loprinavir, nelfinavir, ritonavir and saquinavir. Use of protease inhibitors in tritherapy regimens permit more ambitious therapeutic strategies. Reverse transcriptase/ribonuclease H: RT can be inhibited either by nucleoside RT inhibitors (NRTIs) or by non nucleoside RT inhibitors (NNRTIs). NRTIs act as chain terminators, whereas NNRTIs inhibit DNA polymerization by binding a small hydrophobic pocket near the RT active site and inducing an allosteric change in this region. Classical NRTIs are abacavir, adefovir (PMEA), didanosine (ddI), lamivudine (3TC), stavudine (d4T), tenofovir (PMPA), zalcitabine (ddC), and zidovudine (AZT). Classical NNRTIs are atevirdine (BHAP U-87201E), delavirdine, efavirenz (DMP-266), emivirine (I-EBU), and nevirapine (BI-RG-587). The tritherapies used as a basic effective treatment of AIDS associate two NRTIs and one NNRTI. Functionally, mediates, with Gag polyprotein, the essential events in virion assembly, including binding the plasma membrane, making the protein-protein interactions necessary to create spherical particles, recruiting the viral Env proteins, and packaging the genomic RNA via direct interactions with the RNA packaging sequence (Psi). Gag-Pol polyprotein may regulate its own translation, by the binding genomic RNA in the 5'-UTR. At low concentration, the polyprotein would promote translation, whereas at high concentration, the polyprotein would encapsidate genomic RNA and then shut off translation. Its function is as follows. Targets the polyprotein to the plasma membrane via a multipartite membrane-binding signal, that includes its myristoylated N-terminus. Matrix protein is part of the pre-integration complex. Implicated in the release from host cell mediated by Vpu. Binds to RNA. In terms of biological role, forms the conical core that encapsulates the genomic RNA-nucleocapsid complex in the virion. Most core are conical, with only 7% tubular. The core is constituted by capsid protein hexamer subunits. The core is disassembled soon after virion entry. Host restriction factors such as TRIM5-alpha or TRIMCyp bind retroviral capsids and cause premature capsid disassembly, leading to blocks in reverse transcription. Capsid restriction by TRIM5 is one of the factors which restricts HIV-1 to the human species. Host PIN1 apparently facilitates the virion uncoating. On the other hand, interactions with PDZD8 or CYPA stabilize the capsid. Encapsulates and protects viral dimeric unspliced genomic RNA (gRNA). Binds these RNAs through its zinc fingers. Acts as a nucleic acid chaperone which is involved in rearangement of nucleic acid secondary structure during gRNA retrotranscription. Also facilitates template switch leading to recombination. As part of the polyprotein, participates in gRNA dimerization, packaging, tRNA incorporation and virion assembly. Functionally, aspartyl protease that mediates proteolytic cleavages of Gag and Gag-Pol polyproteins during or shortly after the release of the virion from the plasma membrane. Cleavages take place as an ordered, step-wise cascade to yield mature proteins. This process is called maturation. Displays maximal activity during the budding process just prior to particle release from the cell. Also cleaves Nef and Vif, probably concomitantly with viral structural proteins on maturation of virus particles. Hydrolyzes host EIF4GI and PABP1 in order to shut off the capped cellular mRNA translation. The resulting inhibition of cellular protein synthesis serves to ensure maximal viral gene expression and to evade host immune response. Also mediates cleavage of host YTHDF3. Mediates cleavage of host CARD8, thereby activating the CARD8 inflammasome, leading to the clearance of latent HIV-1 in patient CD4(+) T-cells after viral reactivation; in contrast, HIV-1 can evade CARD8-sensing when its protease remains inactive in infected cells prior to viral budding. Its function is as follows. Multifunctional enzyme that converts the viral RNA genome into dsDNA in the cytoplasm, shortly after virus entry into the cell. This enzyme displays a DNA polymerase activity that can copy either DNA or RNA templates, and a ribonuclease H (RNase H) activity that cleaves the RNA strand of RNA-DNA heteroduplexes in a partially processive 3' to 5' endonucleasic mode. Conversion of viral genomic RNA into dsDNA requires many steps. A tRNA(3)-Lys binds to the primer-binding site (PBS) situated at the 5'-end of the viral RNA. RT uses the 3' end of the tRNA primer to perform a short round of RNA-dependent minus-strand DNA synthesis. The reading proceeds through the U5 region and ends after the repeated (R) region which is present at both ends of viral RNA. The portion of the RNA-DNA heteroduplex is digested by the RNase H, resulting in a ssDNA product attached to the tRNA primer. This ssDNA/tRNA hybridizes with the identical R region situated at the 3' end of viral RNA. This template exchange, known as minus-strand DNA strong stop transfer, can be either intra- or intermolecular. RT uses the 3' end of this newly synthesized short ssDNA to perform the RNA-dependent minus-strand DNA synthesis of the whole template. RNase H digests the RNA template except for two polypurine tracts (PPTs) situated at the 5'-end and near the center of the genome. It is not clear if both polymerase and RNase H activities are simultaneous. RNase H probably can proceed both in a polymerase-dependent (RNA cut into small fragments by the same RT performing DNA synthesis) and a polymerase-independent mode (cleavage of remaining RNA fragments by free RTs). Secondly, RT performs DNA-directed plus-strand DNA synthesis using the PPTs that have not been removed by RNase H as primers. PPTs and tRNA primers are then removed by RNase H. The 3' and 5' ssDNA PBS regions hybridize to form a circular dsDNA intermediate. Strand displacement synthesis by RT to the PBS and PPT ends produces a blunt ended, linear dsDNA copy of the viral genome that includes long terminal repeats (LTRs) at both ends. In terms of biological role, catalyzes viral DNA integration into the host chromosome, by performing a series of DNA cutting and joining reactions. This enzyme activity takes place after virion entry into a cell and reverse transcription of the RNA genome in dsDNA. The first step in the integration process is 3' processing. This step requires a complex comprising the viral genome, matrix protein, Vpr and integrase. This complex is called the pre-integration complex (PIC). The integrase protein removes 2 nucleotides from each 3' end of the viral DNA, leaving recessed CA OH's at the 3' ends. In the second step, the PIC enters cell nucleus. This process is mediated through integrase and Vpr proteins, and allows the virus to infect a non dividing cell. This ability to enter the nucleus is specific of lentiviruses, other retroviruses cannot and rely on cell division to access cell chromosomes. In the third step, termed strand transfer, the integrase protein joins the previously processed 3' ends to the 5' ends of strands of target cellular DNA at the site of integration. The 5'-ends are produced by integrase-catalyzed staggered cuts, 5 bp apart. A Y-shaped, gapped, recombination intermediate results, with the 5'-ends of the viral DNA strands and the 3' ends of target DNA strands remaining unjoined, flanking a gap of 5 bp. The last step is viral DNA integration into host chromosome. This involves host DNA repair synthesis in which the 5 bp gaps between the unjoined strands are filled in and then ligated. Since this process occurs at both cuts flanking the HIV genome, a 5 bp duplication of host DNA is produced at the ends of HIV-1 integration. Alternatively, Integrase may catalyze the excision of viral DNA just after strand transfer, this is termed disintegration. The sequence is that of Gag-Pol polyprotein (gag-pol) from Human immunodeficiency virus type 1 group M subtype G (isolate 92NG083) (HIV-1).